The sequence spans 210 residues: High mobility group protein B2 (210 aa).

K3 is modified (N6-acetyllysine). Positions 9–79 form a DNA-binding region, HMG box 1; that stretch reads PRGKMSSYAF…RYDREMKNYV (71 aa). Cysteine sulfonic acid (-SO3H); alternate is present on C23. A disulfide bond links C23 and C45. N6-acetyllysine is present on K30. Phosphoserine is present on S35. K43 is modified (N6-acetyllysine). C45 carries the cysteine sulfonic acid (-SO3H); alternate modification. The segment at 71–102 is disordered; the sequence is YDREMKNYVPPKGDKKGKKKDPNAPKRPPSAF. K90 carries the N6-acetyllysine modification. Positions 95–163 form a DNA-binding region, HMG box 2; that stretch reads PKRPPSAFFL…KYEKDIAAYR (69 aa). S100 carries the phosphoserine modification. At C106 the chain carries Cysteine sulfonic acid (-SO3H). An N6-acetyllysine mark is found at K114 and K141. Over residues 162–172 the composition is skewed to basic and acidic residues; the sequence is YRAKGKSEAGK. The segment at 162–210 is disordered; the sequence is YRAKGKSEAGKKGPGRPTGSKKKNEPEDEEEEEEEEEEEDDEEEEEDEE. The required for chemotactic activity stretch occupies residues 165–180; the sequence is KGKSEAGKKGPGRPTG. Acidic residues predominate over residues 187 to 210; sequence PEDEEEEEEEEEEEDDEEEEEDEE.

Belongs to the HMGB family. As to quaternary structure, interacts with POU2F2, POU2F1 and POU3F1. Component of the RAG complex composed of core components RAG1 and RAG2, and associated component HMGB1 or HMGB2. Component of the SET complex, composed of at least ANP32A, APEX1, HMGB2, NME1, SET and TREX1. Directly interacts with SET. Interacts with LEF1. In terms of processing, reduction/oxidation of cysteine residues Cys-23, Cys-45 and Cys-106 and a possible intramolecular disulfide bond involving Cys-23 and Cys-45 give rise to different redox forms with specific functional activities in various cellular compartments: 1- fully reduced HMGB2 (HMGB2C23hC45hC106h), 2- disulfide HMGB2 (HMGB2C23-C45C106h) and 3- sulfonyl HMGB2 (HMGB2C23soC45soC106so). As to expression, widely expressed in embryo. In adult mainly expressed in lymphoid organs and testes. Expressed in primary spermatocytes. Expressed in the superficial zone of articular cartilage.

It is found in the nucleus. It localises to the chromosome. The protein resides in the cytoplasm. The protein localises to the secreted. Multifunctional protein with various roles in different cellular compartments. May act in a redox sensitive manner. In the nucleus is an abundant chromatin-associated non-histone protein involved in transcription, chromatin remodeling and V(D)J recombination and probably other processes. Binds DNA with a preference to non-canonical DNA structures such as single-stranded DNA. Can bent DNA and enhance DNA flexibility by looping thus providing a mechanism to promote activities on various gene promoters by enhancing transcription factor binding and/or bringing distant regulatory sequences into close proximity. Involved in V(D)J recombination by acting as a cofactor of the RAG complex: acts by stimulating cleavage and RAG protein binding at the 23 bp spacer of conserved recombination signal sequences (RSS). Proposed to be involved in the innate immune response to nucleic acids by acting as a cytoplasmic promiscuous immunogenic DNA/RNA sensor which cooperates with subsequent discriminative sensing by specific pattern recognition receptors. In the extracellular compartment acts as a chemokine. Promotes proliferation and migration of endothelial cells implicating AGER/RAGE. Has antimicrobial activity in gastrointestinal epithelial tissues. Involved in inflammatory response to antigenic stimulus coupled with pro-inflammatory activity. May play a role in germ cell differentiation. Involved in modulation of neurogenesis probably by regulation of neural stem proliferation. Involved in articular cartilage surface maintenance implicating LEF1 and the Wnt/beta-catenin pathway. The protein is High mobility group protein B2 (Hmgb2) of Mus musculus (Mouse).